We begin with the raw amino-acid sequence, 360 residues long: Peptide chain release factor 1 (360 aa).

Glutamine 235 carries the N5-methylglutamine modification. Residues 284–313 form a disordered region; the sequence is AKRQQAEASTRRNLLGSGDRSDRNRTYNFP.

The protein belongs to the prokaryotic/mitochondrial release factor family. Post-translationally, methylated by PrmC. Methylation increases the termination efficiency of RF1.

It is found in the cytoplasm. Functionally, peptide chain release factor 1 directs the termination of translation in response to the peptide chain termination codons UAG and UAA. The polypeptide is Peptide chain release factor 1 (Citrobacter koseri (strain ATCC BAA-895 / CDC 4225-83 / SGSC4696)).